The chain runs to 387 residues: Sulfopyruvate decarboxylase (387 aa).

This sequence belongs to the TPP enzyme family. The cofactor is thiamine diphosphate.

The catalysed reaction is 3-sulfopyruvate + H(+) = sulfoacetaldehyde + CO2. Its pathway is cofactor biosynthesis; coenzyme M biosynthesis. In terms of biological role, involved in the biosynthesis of the coenzyme M (2-mercaptoethanesulfonic acid). Catalyzes the decarboxylation of sulfopyruvate to sulfoacetaldehyde. Is not able to decarboxylate the analogous compounds 2-oxoglutarate or 2-oxosuberate. This chain is Sulfopyruvate decarboxylase, found in Methanosarcina acetivorans (strain ATCC 35395 / DSM 2834 / JCM 12185 / C2A).